Here is a 257-residue protein sequence, read N- to C-terminus: Imidazole glycerol phosphate synthase subunit HisF (257 aa).

Active-site residues include aspartate 12 and aspartate 131.

Belongs to the HisA/HisF family. In terms of assembly, heterodimer of HisH and HisF.

The protein resides in the cytoplasm. The catalysed reaction is 5-[(5-phospho-1-deoxy-D-ribulos-1-ylimino)methylamino]-1-(5-phospho-beta-D-ribosyl)imidazole-4-carboxamide + L-glutamine = D-erythro-1-(imidazol-4-yl)glycerol 3-phosphate + 5-amino-1-(5-phospho-beta-D-ribosyl)imidazole-4-carboxamide + L-glutamate + H(+). The protein operates within amino-acid biosynthesis; L-histidine biosynthesis; L-histidine from 5-phospho-alpha-D-ribose 1-diphosphate: step 5/9. IGPS catalyzes the conversion of PRFAR and glutamine to IGP, AICAR and glutamate. The HisF subunit catalyzes the cyclization activity that produces IGP and AICAR from PRFAR using the ammonia provided by the HisH subunit. The protein is Imidazole glycerol phosphate synthase subunit HisF of Rhodococcus opacus (strain B4).